The primary structure comprises 80 residues: Putative antitoxin VapB44 (80 aa).

The segment at 40–68 is disordered; the sequence is NQNPQPAASQEDAFHGFEPLPHRGGAVSN.

Its function is as follows. Possibly the antitoxin component of a type II toxin-antitoxin (TA) system. Its cognate toxin is VapC44 (Potential). This is Putative antitoxin VapB44 (vapB44) from Mycobacterium tuberculosis (strain CDC 1551 / Oshkosh).